The primary structure comprises 192 residues: Thymidine kinase (192 aa).

Residues 9-16 and 87-90 contribute to the ATP site; these read SAMNAGKS and DECQ. Glu-88 serves as the catalytic Proton acceptor. Residues Cys-145, Cys-147, Cys-182, and His-185 each contribute to the Zn(2+) site.

Belongs to the thymidine kinase family. As to quaternary structure, homotetramer.

It localises to the cytoplasm. It catalyses the reaction thymidine + ATP = dTMP + ADP + H(+). The chain is Thymidine kinase from Shewanella oneidensis (strain ATCC 700550 / JCM 31522 / CIP 106686 / LMG 19005 / NCIMB 14063 / MR-1).